The following is a 160-amino-acid chain: 6,7-dimethyl-8-ribityllumazine synthase (160 aa).

5-amino-6-(D-ribitylamino)uracil contacts are provided by residues W28, 59–61, and 82–84; these read SFE and VII. Residue 87–88 participates in (2S)-2-hydroxy-3-oxobutyl phosphate binding; it reads GT. Residue H90 is the Proton donor of the active site. F115 contributes to the 5-amino-6-(D-ribitylamino)uracil binding site. Position 129 (R129) interacts with (2S)-2-hydroxy-3-oxobutyl phosphate.

This sequence belongs to the DMRL synthase family.

It catalyses the reaction (2S)-2-hydroxy-3-oxobutyl phosphate + 5-amino-6-(D-ribitylamino)uracil = 6,7-dimethyl-8-(1-D-ribityl)lumazine + phosphate + 2 H2O + H(+). Its pathway is cofactor biosynthesis; riboflavin biosynthesis; riboflavin from 2-hydroxy-3-oxobutyl phosphate and 5-amino-6-(D-ribitylamino)uracil: step 1/2. Its function is as follows. Catalyzes the formation of 6,7-dimethyl-8-ribityllumazine by condensation of 5-amino-6-(D-ribitylamino)uracil with 3,4-dihydroxy-2-butanone 4-phosphate. This is the penultimate step in the biosynthesis of riboflavin. This chain is 6,7-dimethyl-8-ribityllumazine synthase, found in Clavibacter michiganensis subsp. michiganensis (strain NCPPB 382).